Here is a 110-residue protein sequence, read N- to C-terminus: Large ribosomal subunit protein uL22 (110 aa).

It belongs to the universal ribosomal protein uL22 family. As to quaternary structure, part of the 50S ribosomal subunit.

Functionally, this protein binds specifically to 23S rRNA; its binding is stimulated by other ribosomal proteins, e.g. L4, L17, and L20. It is important during the early stages of 50S assembly. It makes multiple contacts with different domains of the 23S rRNA in the assembled 50S subunit and ribosome. Its function is as follows. The globular domain of the protein is located near the polypeptide exit tunnel on the outside of the subunit, while an extended beta-hairpin is found that lines the wall of the exit tunnel in the center of the 70S ribosome. The protein is Large ribosomal subunit protein uL22 of Actinobacillus pleuropneumoniae serotype 5b (strain L20).